Consider the following 476-residue polypeptide: Scopoletin glucosyltransferase (476 aa).

His-16 serves as the catalytic Proton acceptor. An anthocyanidin is bound at residue His-16. The active-site Charge relay is the Asp-119. The UDP-alpha-D-glucose site is built by Ala-343, Gln-345, His-360, Trp-363, Asn-364, Ser-365, and Glu-368. Ala-383 is a binding site for an anthocyanidin. UDP-alpha-D-glucose-binding residues include Glu-384 and Gln-385.

The protein belongs to the UDP-glycosyltransferase family.

The catalysed reaction is scopoletin + UDP-alpha-D-glucose = scopolin + UDP + H(+). Glucosyltransferase acting preferentially on aromatic substrates of the phenylpropanoid types. The best substrates are scopoletin and esculetin. Required for full resistance to virus. This chain is Scopoletin glucosyltransferase (TOGT1), found in Nicotiana tabacum (Common tobacco).